Reading from the N-terminus, the 534-residue chain is Cytochrome P450 monooxygenase ascG (534 aa).

Residues 13-33 form a helical membrane-spanning segment; the sequence is FVASFPALSAAAGLIVAISFI. N-linked (GlcNAc...) asparagine glycosylation is present at Asn466. Cys469 serves as a coordination point for heme.

The protein belongs to the cytochrome P450 family. Heme serves as cofactor.

It is found in the membrane. The catalysed reaction is ilicicolin C + NADPH + O2 + H(+) = ascochlorin + NADP(+) + 2 H2O. Its pathway is secondary metabolite biosynthesis; terpenoid biosynthesis. Cytochrome P450 monooxygenase; part of the asc-1 gene cluster that mediates the biosynthesis of both ascochlorin and ascofuranone, a strong inhibitor of cyanide-insensitive alternative oxidases and a promising drug candidate against African trypanosomiasis. The first step in the pathway is performed by the non-reducing polyketide synthase ascC that produces orsellinic acid by condensing acetyl-CoA with 3 malonyl-CoA units. Orsellinic acid is then prenylated by the prenyltransferase ascA to yield ilicicolinic acid B. Ilicicolinic acid B is further reduced to ilicicolin B by the reductase ascB. The halogenase ascD then chlorinates ilicicolin B to produce ilicicolin A which is converted to ilicicolin A epoxide by the cytochrome P450 monooxygenase ascE that catalyzes stereoselective epoxidation of the terminal double bond of the prenyl group. Ilicicolin A epoxide is the last common precursor for the biosynthesis of ascofuranone and ascochlorin. The terpene cyclase ascF produces a monocyclic terpene, and the cyclization reaction is proposed to be initiated by protonation of the terminal epoxide of ilicicolin A epoxide to generate a monocyclic tertiarycation, which is followed by a series of hydride and methyl shifts with abstraction of proton, leading to the formation of the (14S,15R,19R)-trimethylcyclohexanone ring structure of ilicicolin C, which is finally reduced to ascochlorin by the dehydrogenase ascG. On the other hand, ilicicolin A epoxide is hydroxylated by the cytochrome P450 monooxygenase ascH, and the resultant product is cyclized by the terpene cyclase ascI to ascofuranol via protonation-initiated epoxide ring opening, which facilitates the 6-endo-tet cyclization to form the tetrahy-drofuran ring. Finally, ascofuranol is oxidized into ascofuranone by ascJ. This Acremonium egyptiacum (Oospora egyptiaca) protein is Cytochrome P450 monooxygenase ascG.